Reading from the N-terminus, the 299-residue chain is tRNA dimethylallyltransferase (299 aa).

13 to 20 (GPTASGKT) contacts ATP. Residue 15–20 (TASGKT) participates in substrate binding. The segment at 38 to 41 (DSRQ) is interaction with substrate tRNA.

This sequence belongs to the IPP transferase family. As to quaternary structure, monomer. The cofactor is Mg(2+).

It catalyses the reaction adenosine(37) in tRNA + dimethylallyl diphosphate = N(6)-dimethylallyladenosine(37) in tRNA + diphosphate. In terms of biological role, catalyzes the transfer of a dimethylallyl group onto the adenine at position 37 in tRNAs that read codons beginning with uridine, leading to the formation of N6-(dimethylallyl)adenosine (i(6)A). In Prochlorococcus marinus (strain AS9601), this protein is tRNA dimethylallyltransferase.